Consider the following 381-residue polypeptide: Transaldolase 2 (381 aa).

The Schiff-base intermediate with substrate role is filled by lysine 141.

Belongs to the transaldolase family. Type 2 subfamily.

It is found in the cytoplasm. The catalysed reaction is D-sedoheptulose 7-phosphate + D-glyceraldehyde 3-phosphate = D-erythrose 4-phosphate + beta-D-fructose 6-phosphate. It functions in the pathway carbohydrate degradation; pentose phosphate pathway; D-glyceraldehyde 3-phosphate and beta-D-fructose 6-phosphate from D-ribose 5-phosphate and D-xylulose 5-phosphate (non-oxidative stage): step 2/3. Its function is as follows. Transaldolase is important for the balance of metabolites in the pentose-phosphate pathway. This chain is Transaldolase 2 (tal2), found in Nostoc punctiforme (strain ATCC 29133 / PCC 73102).